The primary structure comprises 328 residues: Glyoxylate reductase/hydroxypyruvate reductase (328 aa).

Residue Ser36 is modified to Phosphoserine. A substrate-binding site is contributed by 83 to 84 (VG). NADP(+)-binding positions include 162–164 (GRI), 185–188 (RQPR), Ser217, and Ile243. Substrate is bound by residues Arg245, Asp269, and 293–296 (HIGS). The active-site Proton donor is the His293. Residue Gly295 participates in NADP(+) binding. A Phosphothreonine modification is found at Thr298.

The protein belongs to the D-isomer specific 2-hydroxyacid dehydrogenase family. As to quaternary structure, homodimer.

The enzyme catalyses glycolate + NADP(+) = glyoxylate + NADPH + H(+). It carries out the reaction (R)-glycerate + NAD(+) = 3-hydroxypyruvate + NADH + H(+). It catalyses the reaction (R)-glycerate + NADP(+) = 3-hydroxypyruvate + NADPH + H(+). Functionally, enzyme with hydroxy-pyruvate reductase, glyoxylate reductase and D-glycerate dehydrogenase enzymatic activities. Reduces hydroxypyruvate to D-glycerate, glyoxylate to glycolate oxidizes D-glycerate to hydroxypyruvate. The sequence is that of Glyoxylate reductase/hydroxypyruvate reductase (Grhpr) from Mus musculus (Mouse).